A 237-amino-acid chain; its full sequence is Flagellar L-ring protein (237 aa).

An N-terminal signal peptide occupies residues 1 to 24 (MNRLSVPRFSVLIASLCGITLLSG). A lipid anchor (N-palmitoyl cysteine) is attached at C25. Residue C25 is the site of S-diacylglycerol cysteine attachment.

It belongs to the FlgH family. The basal body constitutes a major portion of the flagellar organelle and consists of four rings (L,P,S, and M) mounted on a central rod.

The protein resides in the cell outer membrane. The protein localises to the bacterial flagellum basal body. In terms of biological role, assembles around the rod to form the L-ring and probably protects the motor/basal body from shearing forces during rotation. The protein is Flagellar L-ring protein of Pseudomonas syringae pv. syringae (strain B728a).